The following is a 489-amino-acid chain: UDP-N-acetylmuramoyl-L-alanyl-D-glutamate--2,6-diaminopimelate ligase (489 aa).

Position 32 (serine 32) interacts with UDP-N-acetyl-alpha-D-muramoyl-L-alanyl-D-glutamate. Glycine 113–threonine 119 is a binding site for ATP. Residues threonine 154–threonine 155, serine 181, glutamine 187, and arginine 189 each bind UDP-N-acetyl-alpha-D-muramoyl-L-alanyl-D-glutamate. Lysine 221 carries the N6-carboxylysine modification. Meso-2,6-diaminopimelate-binding positions include arginine 381, aspartate 405–arginine 408, glycine 456, and glutamate 460. The Meso-diaminopimelate recognition motif motif lies at aspartate 405–arginine 408.

Belongs to the MurCDEF family. MurE subfamily. The cofactor is Mg(2+). Carboxylation is probably crucial for Mg(2+) binding and, consequently, for the gamma-phosphate positioning of ATP.

It is found in the cytoplasm. It carries out the reaction UDP-N-acetyl-alpha-D-muramoyl-L-alanyl-D-glutamate + meso-2,6-diaminopimelate + ATP = UDP-N-acetyl-alpha-D-muramoyl-L-alanyl-gamma-D-glutamyl-meso-2,6-diaminopimelate + ADP + phosphate + H(+). It participates in cell wall biogenesis; peptidoglycan biosynthesis. Its function is as follows. Catalyzes the addition of meso-diaminopimelic acid to the nucleotide precursor UDP-N-acetylmuramoyl-L-alanyl-D-glutamate (UMAG) in the biosynthesis of bacterial cell-wall peptidoglycan. The sequence is that of UDP-N-acetylmuramoyl-L-alanyl-D-glutamate--2,6-diaminopimelate ligase from Gloeobacter violaceus (strain ATCC 29082 / PCC 7421).